Here is a 269-residue protein sequence, read N- to C-terminus: Zinc transporter ZupT (269 aa).

8 consecutive transmembrane segments (helical) span residues 5–25, 38–58, 75–95, 125–145, 158–178, 190–210, 212–232, and 249–269; these read VLLAFGLTLFAGLATGVGSLI, SLALGFSAGVMIYVSLVEIFV, WMTIAGFFGGMLFIALIDKFI, MGIFTALAIGIHNFPEGIATF, IAIAVAIHNIPEGIAVSVPIF, LSFLSGLAEPVGALVAFLLLM, FLTDVMFGIIFAGVAGIMVFI, and LSMYGLVGGMAVMAISLVLLV. Positions 137 and 140 each coordinate Fe(2+). Residues glutamate 140 and histidine 165 each coordinate Zn(2+). Asparagine 166, glutamate 169, and glutamate 198 together coordinate Fe(2+). Glutamate 169 lines the Zn(2+) pocket.

Belongs to the ZIP transporter (TC 2.A.5) family. ZupT subfamily.

The protein localises to the cell membrane. It carries out the reaction Zn(2+)(in) = Zn(2+)(out). Its function is as follows. Mediates zinc uptake. May also transport other divalent cations. The chain is Zinc transporter ZupT from Lysinibacillus sphaericus (strain C3-41).